A 457-amino-acid chain; its full sequence is Dolichol phosphate-mannose mannosyltransferase (457 aa).

Over 1–12 the chain is Cytoplasmic; sequence MKRLAKAAFSQN. The chain crosses the membrane as a helical span at residues 13 to 33; it reads SLTAPIVSTFVYLISVVRVVL. Residues 34 to 91 lie on the Extracellular side of the membrane; that stretch reads NGNWPVTSSDTAMFQHIGWMVFSGKRYYIDAWDPKPPLTLELATIIAYISNGDPHLQH. Residues 92-112 traverse the membrane as a helical segment; sequence TLSVVSTIVAGILLTYLISHI. Over 113 to 120 the chain is Cytoplasmic; it reads TSEITGNQ. The helical transmembrane segment at 121–141 threads the bilayer; the sequence is FAGLLSGIVFITFPVIHYSAV. The Extracellular portion of the chain corresponds to 142–173; sequence FGYEPKYFVFLFGLGSIYLSRNPKPILSGAAA. The helical transmembrane segment at 174 to 194 threads the bilayer; sequence AASAGMWQFAIIFPIISFGII. Residues 195 to 211 are Cytoplasmic-facing; sequence SRRKSKDLILKYVFGAT. A helical membrane pass occupies residues 212 to 232; it reads IIAFISLLPIYLQGGLVAMTV. The Extracellular portion of the chain corresponds to 233 to 259; it reads EVIIAPLYAGETQSFLYRLVKGVTHLK. Residues 260–280 form a helical membrane-spanning segment; it reads LMIPIALLGMAGILLGFLDDI. Over 281–283 the chain is Cytoplasmic; that stretch reads RER. Residues 284–304 traverse the membrane as a helical segment; the sequence is WWVVGLLLWFCIQIFILDYDG. Residues 305-307 are Extracellular-facing; it reads ADD. The chain crosses the membrane as a helical span at residues 308 to 328; it reads LFLGIILVSMGIGFAFEKLST. At 329 to 337 the chain is on the cytoplasmic side; the sequence is KYESERINS. Residues 338–358 form a helical membrane-spanning segment; the sequence is IVTAVVVCMLIWQVVTLGGVG. Over 359–457 the chain is Extracellular; it reads VITNPYSYSG…EEKCGKWRLP (99 aa).

It is found in the cell membrane. It participates in cell surface structure biogenesis; S-layer biogenesis. Its pathway is protein modification; protein glycosylation. Involved in the assembly of a N-linked pentasaccharide that decorates the S-layer glycoprotein and flagellins. Transfers mannose, the terminal pentasaccharide residue, from its dedicated dolichol phosphate carrier to the protein-bound glycan comprising the first four subunits of the N-linked pentasaccharide. The chain is Dolichol phosphate-mannose mannosyltransferase (aglS) from Haloferax volcanii (strain ATCC 29605 / DSM 3757 / JCM 8879 / NBRC 14742 / NCIMB 2012 / VKM B-1768 / DS2) (Halobacterium volcanii).